We begin with the raw amino-acid sequence, 169 residues long: Crossover junction endodeoxyribonuclease RuvC (169 aa).

Catalysis depends on residues Asp11, Glu71, and Asp143. Mg(2+) contacts are provided by Asp11, Glu71, and Asp143.

The protein belongs to the RuvC family. In terms of assembly, homodimer which binds Holliday junction (HJ) DNA. The HJ becomes 2-fold symmetrical on binding to RuvC with unstacked arms; it has a different conformation from HJ DNA in complex with RuvA. In the full resolvosome a probable DNA-RuvA(4)-RuvB(12)-RuvC(2) complex forms which resolves the HJ. Requires Mg(2+) as cofactor.

The protein localises to the cytoplasm. The enzyme catalyses Endonucleolytic cleavage at a junction such as a reciprocal single-stranded crossover between two homologous DNA duplexes (Holliday junction).. Functionally, the RuvA-RuvB-RuvC complex processes Holliday junction (HJ) DNA during genetic recombination and DNA repair. Endonuclease that resolves HJ intermediates. Cleaves cruciform DNA by making single-stranded nicks across the HJ at symmetrical positions within the homologous arms, yielding a 5'-phosphate and a 3'-hydroxyl group; requires a central core of homology in the junction. The consensus cleavage sequence is 5'-(A/T)TT(C/G)-3'. Cleavage occurs on the 3'-side of the TT dinucleotide at the point of strand exchange. HJ branch migration catalyzed by RuvA-RuvB allows RuvC to scan DNA until it finds its consensus sequence, where it cleaves and resolves the cruciform DNA. This is Crossover junction endodeoxyribonuclease RuvC from Rhizobium etli (strain ATCC 51251 / DSM 11541 / JCM 21823 / NBRC 15573 / CFN 42).